Consider the following 185-residue polypeptide: Deoxyuridine 5'-triphosphate nucleotidohydrolase (185 aa).

Positions 1–23 (MSHLQAHMQRNNKESHSLSPFSQ) are disordered. Residues 95–97 (RSG), Asn-108, 112–114 (TID), and Lys-122 each bind substrate. Positions 160 to 185 (DQKDSSQTPSNEGSRGADGFGSTGHD) are disordered. Residues 175 to 185 (GADGFGSTGHD) show a composition bias toward gly residues.

Belongs to the dUTPase family. Mg(2+) is required as a cofactor.

The catalysed reaction is dUTP + H2O = dUMP + diphosphate + H(+). It participates in pyrimidine metabolism; dUMP biosynthesis; dUMP from dCTP (dUTP route): step 2/2. In terms of biological role, this enzyme is involved in nucleotide metabolism: it produces dUMP, the immediate precursor of thymidine nucleotides and it decreases the intracellular concentration of dUTP so that uracil cannot be incorporated into DNA. In Bartonella quintana (strain Toulouse) (Rochalimaea quintana), this protein is Deoxyuridine 5'-triphosphate nucleotidohydrolase.